Reading from the N-terminus, the 568-residue chain is Adenine deaminase (568 aa).

Belongs to the metallo-dependent hydrolases superfamily. Adenine deaminase family. It depends on Mn(2+) as a cofactor.

It carries out the reaction adenine + H2O + H(+) = hypoxanthine + NH4(+). In Clostridium perfringens (strain ATCC 13124 / DSM 756 / JCM 1290 / NCIMB 6125 / NCTC 8237 / Type A), this protein is Adenine deaminase.